A 426-amino-acid chain; its full sequence is 4-hydroxy-3-methylbut-2-en-1-yl diphosphate synthase (flavodoxin) (426 aa).

Cys310, Cys313, Cys356, and Glu363 together coordinate [4Fe-4S] cluster.

Belongs to the IspG family. [4Fe-4S] cluster is required as a cofactor.

The enzyme catalyses (2E)-4-hydroxy-3-methylbut-2-enyl diphosphate + oxidized [flavodoxin] + H2O + 2 H(+) = 2-C-methyl-D-erythritol 2,4-cyclic diphosphate + reduced [flavodoxin]. The protein operates within isoprenoid biosynthesis; isopentenyl diphosphate biosynthesis via DXP pathway; isopentenyl diphosphate from 1-deoxy-D-xylulose 5-phosphate: step 5/6. Functionally, converts 2C-methyl-D-erythritol 2,4-cyclodiphosphate (ME-2,4cPP) into 1-hydroxy-2-methyl-2-(E)-butenyl 4-diphosphate. The sequence is that of 4-hydroxy-3-methylbut-2-en-1-yl diphosphate synthase (flavodoxin) from Rhodopseudomonas palustris (strain BisA53).